We begin with the raw amino-acid sequence, 399 residues long: Myb-related transcription factor, partner of profilin (399 aa).

One can recognise a Myb-like domain in the interval 12 to 84; the sequence is TTRLRKPRFS…EVQKRWNDFK (73 aa). Positions 83-86 match the Nuclear localization signal motif; the sequence is FKRR. Disordered stretches follow at residues 87 to 108, 127 to 261, 297 to 332, and 358 to 399; these read TKEK…AEDA, PGAG…PSLD, LLPG…PKVE, and APRS…WKSP. Positions 127-136 are enriched in low complexity; the sequence is PGAGAGAEEP. Over residues 137–149 the composition is skewed to pro residues; it reads PAAPSSQPPPPSA. Residues 156-170 are compositionally biased toward basic and acidic residues; the sequence is LSEDRREDRRADTSA. Composition is skewed to pro residues over residues 219-252, 305-329, and 366-377; these read SPPP…PPPT, SLPP…PPAP, and PRPPPAPLPPHD. Residues 381-399 show a composition bias toward basic residues; sequence HKRRKGFPTRKRRGRWKSP. 2 short sequence motifs (nuclear localization signal) span residues 382-385 and 390-393; these read KRRK and RKRR.

Interacts with PFN1. Homodimer and heterodimer with PFN1.

Its subcellular location is the nucleus. Functionally, transcriptional repressor; DNA-binding protein that specifically recognizes the core sequence 5'-YAAC[GT]G-3'. Dimerization with PFN1 reduces its DNA-binding capacity. This chain is Myb-related transcription factor, partner of profilin (MYPOP), found in Homo sapiens (Human).